Here is a 423-residue protein sequence, read N- to C-terminus: COP9 signalosome complex subunit 3 (423 aa).

An N-acetylalanine modification is found at alanine 2. The PCI domain maps to 197–365 (NFERALYFYE…GMVSFHDNPE (169 aa)). The tract at residues 402–423 (QFVQKSMGSQEDDSGNKPSSYS) is disordered. Residues serine 407, serine 410, and serine 423 each carry the phosphoserine modification.

The protein belongs to the CSN3 family. In terms of assembly, component of the CSN complex, composed of COPS1/GPS1, COPS2, COPS3, COPS4, COPS5, COPS6, COPS7 (COPS7A or COPS7B), COPS8 and COPS9 isoform 1. In the complex, it probably interacts directly with COPS1, COPS4, COPS8 and COPS9 isoform 1. Interacts with CK2 and PKD. Interacts with the translation initiation factor EIF3S6 and IKBKG. Interacts with ERCC6. Widely expressed. Expressed at high level in heart and skeletal muscle.

It localises to the cytoplasm. The protein localises to the nucleus. Functionally, component of the COP9 signalosome complex (CSN), a complex involved in various cellular and developmental processes. The CSN complex is an essential regulator of the ubiquitin (Ubl) conjugation pathway by mediating the deneddylation of the cullin subunits of SCF-type E3 ligase complexes, leading to decrease the Ubl ligase activity of SCF-type complexes such as SCF, CSA or DDB2. The complex is also involved in phosphorylation of p53/TP53, c-jun/JUN, IkappaBalpha/NFKBIA, ITPK1 and IRF8/ICSBP, possibly via its association with CK2 and PKD kinases. CSN-dependent phosphorylation of TP53 and JUN promotes and protects degradation by the Ubl system, respectively. The protein is COP9 signalosome complex subunit 3 (COPS3) of Homo sapiens (Human).